A 257-amino-acid chain; its full sequence is Imidazole glycerol phosphate synthase subunit HisF (257 aa).

Active-site residues include Asp-11 and Asp-130.

Belongs to the HisA/HisF family. As to quaternary structure, heterodimer of HisH and HisF.

It localises to the cytoplasm. The enzyme catalyses 5-[(5-phospho-1-deoxy-D-ribulos-1-ylimino)methylamino]-1-(5-phospho-beta-D-ribosyl)imidazole-4-carboxamide + L-glutamine = D-erythro-1-(imidazol-4-yl)glycerol 3-phosphate + 5-amino-1-(5-phospho-beta-D-ribosyl)imidazole-4-carboxamide + L-glutamate + H(+). Its pathway is amino-acid biosynthesis; L-histidine biosynthesis; L-histidine from 5-phospho-alpha-D-ribose 1-diphosphate: step 5/9. Its function is as follows. IGPS catalyzes the conversion of PRFAR and glutamine to IGP, AICAR and glutamate. The HisF subunit catalyzes the cyclization activity that produces IGP and AICAR from PRFAR using the ammonia provided by the HisH subunit. This chain is Imidazole glycerol phosphate synthase subunit HisF, found in Shewanella sp. (strain MR-4).